Consider the following 395-residue polypeptide: MKAGQQGRSCGLISPYLAPKNQSERFAFIAEWYDPNASLLRRYELLYYPVDGSVEMHDVKNRRTFLKRTKYEDLRVEDLFIGNKVNVFSRQLVLIDYGDQYTARQLGSRKEKTLALIKPDAVSKAGEIIEMINKSGFTITKLRMMTLSRKEAADFHVDHHSRPFYNELIQFITSGPVIAMEILRDDAICEWKRLLGPANSGIARSEAPGSVRALFGTDGIRNAAHGSDTFESAAREMELFFPSSGGCGPANTAKFTNCTCCIIKPHAISEGMLGKILIAIRDACFEISAIQMFNMDRANVEEFYEVYKGVVSEYNDMVTELYSGPCVAIEIQQSNPTKTFREFCGPSDPEIARHLRPETLRANFGKTKVQNAVHCTDLPEDGLLEVQYFFKILDN.

A DM10 domain is found at 22 to 110 (QSERFAFIAE…YTARQLGSRK (89 aa)).

Belongs to the NDK family. Component of sperm flagellar doublet microtubules. Component of the gamma-tubulin ring complex. Widely expressed. Expressed in the flagellum of epididymal sperm but not in testicular sperm (at protein level).

Its subcellular location is the cytoplasm. The protein resides in the cytoskeleton. It is found in the microtubule organizing center. It localises to the centrosome. The protein localises to the nucleus. Its subcellular location is the spindle. The protein resides in the cilium axoneme. It is found in the flagellum axoneme. It localises to the cell projection. The protein localises to the cilium. Functionally, possesses an intrinsic kinase activity. Displays 3'-5' exonuclease activity with a preference for single-stranded DNA. Does not seem to have nucleoside diphosphate kinase activity. Functional component of the gamma-tubulin ring complex, implicated in the regulation of the microtubule-nucleating activity of the gamma-tubulin ring complex in centrosomes, in a kinase activity-dependent manner. Part of the dynein-decorated doublet microtubules (DMTs) in cilia axoneme, which is required for motile cilia beating. The polypeptide is Nucleoside diphosphate kinase homolog 7 (Nme7) (Rattus norvegicus (Rat)).